A 943-amino-acid polypeptide reads, in one-letter code: Multimerin-2 (943 aa).

Residues 1–22 form the signal peptide; the sequence is MIPTLLLGFGVYLSWGLLGSWA. The EMI domain occupies 54–132; that stretch reads RRNWCPYQKS…PGFQGPDCQD (79 aa). Disulfide bonds link C58–C122, C85–C92, and C121–C130. S63 carries an O-linked (Fuc...) serine glycan. Residue T67 is glycosylated (O-linked (Fuc) threonine). Residues 128-150 form a disordered region; that stretch reads PDCQDHNPTANPEPTEPSGKLQE. N205, N214, N249, N261, N350, N379, N439, and N472 each carry an N-linked (GlcNAc...) asparagine glycan. 2 coiled-coil regions span residues 391–480 and 551–580; these read EEEL…HLHA and RGEG…ALKT. A glycan (N-linked (GlcNAc...) asparagine) is linked at N583. A coiled-coil region spans residues 688 to 720; that stretch reads DSGREEEAMTLAELEQEIRRLSSDVKQIGQCCE. Residues N728 and N766 are each glycosylated (N-linked (GlcNAc...) asparagine). The segment at 778–801 is disordered; it reads LSKKDKKQPRGPGESRKRDKKQVV. Positions 815 to 943 constitute a C1q domain; it reads ETGSPVAFYA…AFGGFLMFKT (129 aa). N-linked (GlcNAc...) asparagine glycosylation is present at N839.

In terms of assembly, heteromer of p110, p125, p140 and p200 subunits; disulfide-linked. Interacts with VEGFA. Interacts with CD93; this interaction promotes angiogenesis. Interacts with CD248. In terms of processing, N- and O-glycosylated. Post-translationally, processed by matrix metalloproteinases (MMPs) including MMP9 and, to a lesser degree, by MMP2 upon angiogenic stimulation. O-fucosylated within the EMI domain (at Ser-63 and Thr-67) by FUT10/POFUT3 and FUT11/POFUT4.

Its subcellular location is the secreted. It is found in the extracellular space. It localises to the extracellular matrix. Its function is as follows. Extracellular matrix protein that plays significant roles in the vascular system and is required for the maintenance and stability of blood vessel. Affects several essential steps in angiogenesis including endothelial cell proliferation, migration, and tube formation. Positively regulates angiogenesis by acting as a ligand for CD93 receptor. The sequence is that of Multimerin-2 from Mus musculus (Mouse).